A 277-amino-acid polypeptide reads, in one-letter code: Thymidylate synthase (277 aa).

Position 27 (arginine 27) interacts with dUMP. Residue histidine 57 coordinates (6R)-5,10-methylene-5,6,7,8-tetrahydrofolate. DUMP is bound at residue 132–133 (RR). Cysteine 152 serves as the catalytic Nucleophile. Residues 179–182 (RSAD), asparagine 190, and 220–222 (HIY) each bind dUMP. Aspartate 182 provides a ligand contact to (6R)-5,10-methylene-5,6,7,8-tetrahydrofolate. Alanine 276 contributes to the (6R)-5,10-methylene-5,6,7,8-tetrahydrofolate binding site.

The protein belongs to the thymidylate synthase family. Bacterial-type ThyA subfamily. As to quaternary structure, homodimer.

It is found in the cytoplasm. The catalysed reaction is dUMP + (6R)-5,10-methylene-5,6,7,8-tetrahydrofolate = 7,8-dihydrofolate + dTMP. The protein operates within pyrimidine metabolism; dTTP biosynthesis. Its function is as follows. Catalyzes the reductive methylation of 2'-deoxyuridine-5'-monophosphate (dUMP) to 2'-deoxythymidine-5'-monophosphate (dTMP) while utilizing 5,10-methylenetetrahydrofolate (mTHF) as the methyl donor and reductant in the reaction, yielding dihydrofolate (DHF) as a by-product. This enzymatic reaction provides an intracellular de novo source of dTMP, an essential precursor for DNA biosynthesis. The chain is Thymidylate synthase from Acidovorax sp. (strain JS42).